The sequence spans 252 residues: 2-succinyl-6-hydroxy-2,4-cyclohexadiene-1-carboxylate synthase (252 aa).

The protein belongs to the AB hydrolase superfamily. MenH family. In terms of assembly, monomer.

The enzyme catalyses 5-enolpyruvoyl-6-hydroxy-2-succinyl-cyclohex-3-ene-1-carboxylate = (1R,6R)-6-hydroxy-2-succinyl-cyclohexa-2,4-diene-1-carboxylate + pyruvate. The protein operates within quinol/quinone metabolism; 1,4-dihydroxy-2-naphthoate biosynthesis; 1,4-dihydroxy-2-naphthoate from chorismate: step 3/7. It participates in quinol/quinone metabolism; menaquinone biosynthesis. Its function is as follows. Catalyzes a proton abstraction reaction that results in 2,5-elimination of pyruvate from 2-succinyl-5-enolpyruvyl-6-hydroxy-3-cyclohexene-1-carboxylate (SEPHCHC) and the formation of 2-succinyl-6-hydroxy-2,4-cyclohexadiene-1-carboxylate (SHCHC). The chain is 2-succinyl-6-hydroxy-2,4-cyclohexadiene-1-carboxylate synthase from Salmonella typhimurium (strain LT2 / SGSC1412 / ATCC 700720).